The sequence spans 98 residues: Integration host factor subunit alpha (98 aa).

The protein belongs to the bacterial histone-like protein family. In terms of assembly, heterodimer of an alpha and a beta chain.

Its function is as follows. This protein is one of the two subunits of integration host factor, a specific DNA-binding protein that functions in genetic recombination as well as in transcriptional and translational control. This Actinobacillus pleuropneumoniae serotype 5b (strain L20) protein is Integration host factor subunit alpha.